The sequence spans 246 residues: 14-3-3 protein beta/alpha (246 aa).

At M1 the chain carries N-acetylmethionine; in 14-3-3 protein beta/alpha; alternate. Position 1 is an N-acetylmethionine (M1). The residue at position 2 (T2) is an N-acetylthreonine; in 14-3-3 protein beta/alpha, N-terminally processed. T2 bears the Phosphothreonine mark. K5 is modified (N6-acetyllysine). K51 is subject to N6-acetyllysine; alternate. K51 participates in a covalent cross-link: Glycyl lysine isopeptide (Lys-Gly) (interchain with G-Cter in SUMO2); alternate. Phosphoserine is present on S60. An N6-acetyllysine modification is found at K70. Y84 and Y106 each carry 3'-nitrotyrosine. K117 carries the post-translational modification N6-acetyllysine. Residues S186 and S232 each carry the phosphoserine modification.

Belongs to the 14-3-3 family. As to quaternary structure, homodimer. Interacts with SAMSN1 and PRKCE. Interacts with AKAP13. Interacts with SSH1 and TORC2/CRTC2. Interacts with ABL1; the interaction results in cytoplasmic location of ABL1 and inhibition of cABL-mediated apoptosis. Interacts with ROR2 (dimer); the interaction results in phosphorylation of YWHAB on tyrosine residues. Interacts with GAB2. Interacts with YAP1 (phosphorylated form). Interacts with the phosphorylated (by AKT1) form of SRPK2. Interacts with PKA-phosphorylated AANAT. Interacts with MYO1C. Interacts with SIRT2. Interacts with the 'Thr-369' phosphorylated form of DAPK2. Interacts with PI4KB, TBC1D22A and TBC1D22B. Interacts with the 'Ser-1134' and 'Ser-1161' phosphorylated form of SOS1. Interacts (via phosphorylated form) with YWHAB; this interaction occurs in a protein kinase AKT1-dependent manner. Interacts with SLITRK1. Interacts with SYNPO2 (phosphorylated form); YWHAB competes with ACTN2 for interaction with SYNPO2. Interacts with RIPOR2 (via phosphorylated form) isoform 2; this interaction occurs in a chemokine-dependent manner and does not compete for binding of RIPOR2 with RHOA nor blocks inhibition of RIPOR2-mediated RHOA activity. Interacts with MARK2 and MARK3. Interacts with TESK1; the interaction is dependent on the phosphorylation of TESK1 'Ser-437' and inhibits TESK1 kinase activity. Interacts with MEFV. Interacts with HDAC4. Interacts with ADAM22 (via C-terminus). (Microbial infection) Interacts with herpes simplex virus 1 protein UL46. In terms of assembly, (Microbial infection) Probably interacts with Chlamydia trachomatis protein IncG. In terms of processing, the alpha, brain-specific form differs from the beta form in being phosphorylated. Phosphorylated on Ser-60 by protein kinase C delta type catalytic subunit in a sphingosine-dependent fashion.

It is found in the cytoplasm. The protein localises to the melanosome. Its subcellular location is the vacuole membrane. In terms of biological role, adapter protein implicated in the regulation of a large spectrum of both general and specialized signaling pathways. Binds to a large number of partners, usually by recognition of a phosphoserine or phosphothreonine motif. Binding generally results in the modulation of the activity of the binding partner. Negative regulator of osteogenesis. Blocks the nuclear translocation of the phosphorylated form (by AKT1) of SRPK2 and antagonizes its stimulatory effect on cyclin D1 expression resulting in blockage of neuronal apoptosis elicited by SRPK2. Negative regulator of signaling cascades that mediate activation of MAP kinases via AKAP13. The sequence is that of 14-3-3 protein beta/alpha (YWHAB) from Homo sapiens (Human).